We begin with the raw amino-acid sequence, 931 residues long: Dymeclin (931 aa).

3 disordered regions span residues 1–53, 599–618, and 839–931; these read MGVA…SSTT, SPSKINTNNSNNNVKDNTNN, and DANN…EKTN. Gly2 carries N-myristoyl glycine lipidation. 2 stretches are compositionally biased toward low complexity: residues 27 to 49 and 601 to 618; these read NNNKNNNNNNNNNNNNNNNNNNN and SKINTNNSNNNVKDNTNN. Polar residues predominate over residues 839–858; it reads DANNFTPKKQLSSDQLHSPP. 2 stretches are compositionally biased toward low complexity: residues 859 to 876 and 889 to 901; these read TNTTTTTTTTTNSTSSNT and QLQQQNNLRNQEQ. The segment covering 919–931 has biased composition (polar residues); that stretch reads TTGVELSSTEKTN.

This sequence belongs to the dymeclin family.

The polypeptide is Dymeclin (dym) (Dictyostelium discoideum (Social amoeba)).